The chain runs to 213 residues: Ras-like protein rasU (213 aa).

21–28 (GDGGVGKT) contributes to the GTP binding site. Positions 43–51 (YDPTIEDLY) match the Effector region motif. Residues 68-72 (DTAGQ) and 126-129 (NKSD) each bind GTP. C210 carries the cysteine methyl ester modification. A lipid anchor (S-geranylgeranyl cysteine) is attached at C210. Positions 211-213 (KMI) are cleaved as a propeptide — removed in mature form.

This sequence belongs to the small GTPase superfamily. Ras family.

The protein resides in the cell membrane. It catalyses the reaction GTP + H2O = GDP + phosphate + H(+). In terms of biological role, ras proteins bind GDP/GTP and possess intrinsic GTPase activity. In Dictyostelium discoideum (Social amoeba), this protein is Ras-like protein rasU (rasU).